The following is a 372-amino-acid chain: Cytochrome b (372 aa).

A run of 4 helical transmembrane segments spans residues phenylalanine 25 to isoleucine 45, tryptophan 69 to isoleucine 90, tryptophan 105 to leucine 125, and phenylalanine 170 to isoleucine 190. Histidine 75 and histidine 89 together coordinate heme b. Residues histidine 174 and histidine 188 each contribute to the heme b site. A ubiquinone is bound at residue histidine 193. Helical transmembrane passes span tyrosine 218 to methionine 238, leucine 280 to histidine 300, leucine 312 to threonine 332, and phenylalanine 339 to proline 358.

This sequence belongs to the cytochrome b family. The cytochrome bc1 complex contains 3 respiratory subunits (MT-CYB, CYC1 and UQCRFS1), 2 core proteins (UQCRC1 and UQCRC2) and probably 6 low-molecular weight proteins. Heme b is required as a cofactor.

The protein resides in the mitochondrion inner membrane. In terms of biological role, component of the ubiquinol-cytochrome c reductase complex (complex III or cytochrome b-c1 complex) that is part of the mitochondrial respiratory chain. The b-c1 complex mediates electron transfer from ubiquinol to cytochrome c. Contributes to the generation of a proton gradient across the mitochondrial membrane that is then used for ATP synthesis. The protein is Cytochrome b (MT-CYB) of Hydrophis semperi (Lake Taal snake).